Consider the following 850-residue polypeptide: Elongation factor 2 (850 aa).

Positions 17–351 (KNIRNISVIA…QIALKLPSPL (335 aa)) constitute a tr-type G domain. Residues 26 to 33 (AHVDHGKS), 159 to 162 (NKLD), and 213 to 215 (SGL) contribute to the GTP site. The residue at position 707 (His-707) is a Diphthamide.

It belongs to the TRAFAC class translation factor GTPase superfamily. Classic translation factor GTPase family. EF-G/EF-2 subfamily.

It localises to the cytoplasm. The enzyme catalyses GTP + H2O = GDP + phosphate + H(+). It participates in protein biosynthesis; polypeptide chain elongation. Functionally, catalyzes the GTP-dependent ribosomal translocation step during translation elongation. During this step, the ribosome changes from the pre-translocational (PRE) to the post-translocational (POST) state as the newly formed A-site-bound peptidyl-tRNA and P-site-bound deacylated tRNA move to the P and E sites, respectively. Catalyzes the coordinated movement of the two tRNA molecules, the mRNA and conformational changes in the ribosome. This Encephalitozoon cuniculi (strain GB-M1) (Microsporidian parasite) protein is Elongation factor 2 (EFT1).